A 381-amino-acid polypeptide reads, in one-letter code: Chaperone protein DnaJ (381 aa).

Positions 5–70 (DFYEVLGVSR…QKKAAYDQYG (66 aa)) constitute a J domain. A CR-type zinc finger spans residues 136 to 214 (GVSKEIEVPT…CHGQGRKQKT (79 aa)). The Zn(2+) site is built by Cys-149, Cys-152, Cys-166, Cys-169, Cys-188, Cys-191, Cys-202, and Cys-205. CXXCXGXG motif repeat units follow at residues 149-156 (CDTCEGTG), 166-173 (CGTCHGHG), 188-195 (CPTCHGKG), and 202-209 (CNVCHGQG).

This sequence belongs to the DnaJ family. In terms of assembly, homodimer. It depends on Zn(2+) as a cofactor.

The protein resides in the cytoplasm. In terms of biological role, participates actively in the response to hyperosmotic and heat shock by preventing the aggregation of stress-denatured proteins and by disaggregating proteins, also in an autonomous, DnaK-independent fashion. Unfolded proteins bind initially to DnaJ; upon interaction with the DnaJ-bound protein, DnaK hydrolyzes its bound ATP, resulting in the formation of a stable complex. GrpE releases ADP from DnaK; ATP binding to DnaK triggers the release of the substrate protein, thus completing the reaction cycle. Several rounds of ATP-dependent interactions between DnaJ, DnaK and GrpE are required for fully efficient folding. Also involved, together with DnaK and GrpE, in the DNA replication of plasmids through activation of initiation proteins. The sequence is that of Chaperone protein DnaJ from Vibrio vulnificus (strain CMCP6).